The sequence spans 149 residues: Large ribosomal subunit protein uL15 (149 aa).

Residues 1 to 12 (MSEPIKLHDLRP) show a composition bias toward basic and acidic residues. The interval 1–55 (MSEPIKLHDLRPAKGANKPKTRVGRGEASKGKTAGRGTKGTKARKQVSAAFEGGQ) is disordered.

Belongs to the universal ribosomal protein uL15 family. Part of the 50S ribosomal subunit.

Its function is as follows. Binds to the 23S rRNA. This chain is Large ribosomal subunit protein uL15, found in Corynebacterium kroppenstedtii (strain DSM 44385 / JCM 11950 / CIP 105744 / CCUG 35717).